The primary structure comprises 490 residues: UDP-N-acetylmuramyl-tripeptide synthetase (490 aa).

ATP is bound at residue 113-119 (GTDGKTT). Residues 158–159 (TT), Ser185, and Arg193 contribute to the UDP-N-acetyl-alpha-D-muramoyl-L-alanyl-D-glutamate site. The residue at position 225 (Lys225) is an N6-carboxylysine.

The protein belongs to the MurCDEF family. MurE subfamily. Carboxylation is probably crucial for Mg(2+) binding and, consequently, for the gamma-phosphate positioning of ATP.

Its subcellular location is the cytoplasm. The protein operates within cell wall biogenesis; peptidoglycan biosynthesis. Functionally, catalyzes the addition of an amino acid to the nucleotide precursor UDP-N-acetylmuramoyl-L-alanyl-D-glutamate (UMAG) in the biosynthesis of bacterial cell-wall peptidoglycan. This is UDP-N-acetylmuramyl-tripeptide synthetase from Deinococcus radiodurans (strain ATCC 13939 / DSM 20539 / JCM 16871 / CCUG 27074 / LMG 4051 / NBRC 15346 / NCIMB 9279 / VKM B-1422 / R1).